A 171-amino-acid chain; its full sequence is Cation channel sperm-associated auxiliary subunit TMEM249 (171 aa).

Residues 1–2 (ML) are Cytoplasmic-facing. The chain crosses the membrane as a helical span at residues 3–17 (FIICLVFISCNVLRE). The Extracellular segment spans residues 18–28 (VKYQETWCFPA). The chain crosses the membrane as a helical span at residues 29–40 (YGMVIGLWLMLS). At 41–171 (SIPQRRLVLN…TKSSVNDLDV (131 aa)) the chain is on the cytoplasmic side.

In terms of assembly, component of the CatSper complex or CatSpermasome composed of the core pore-forming members CATSPER1, CATSPER2, CATSPER3 and CATSPER4 as well as auxiliary members CATSPERB, CATSPERG2, CATSPERD, CATSPERE, CATSPERZ, C2CD6/CATSPERT, SLCO6C1, TMEM249, TMEM262 and EFCAB9. HSPA1 may be an additional auxiliary complex member. The core complex members CATSPER1, CATSPER2, CATSPER3 and CATSPER4 form a heterotetrameric channel. The auxiliary CATSPERB, CATSPERG2, CATSPERD and CATSPERE subunits form a pavilion-like structure over the pore which stabilizes the complex through interactions with CATSPER4, CATSPER3, CATSPER1 and CATSPER2 respectively. SLCO6C1 interacts with CATSPERE and TMEM262/CATSPERH interacts with CATSPERB, further stabilizing the complex. C2CD6/CATSPERT interacts at least with CATSPERD and is required for targeting the CatSper complex in the flagellar membrane.

It is found in the cell projection. The protein localises to the cilium. It localises to the flagellum membrane. In terms of biological role, auxiliary component of the CatSper complex, a complex involved in sperm cell hyperactivation. This chain is Cation channel sperm-associated auxiliary subunit TMEM249, found in Mus musculus (Mouse).